The chain runs to 317 residues: Beta-ketoacyl-[acyl-carrier-protein] synthase III (317 aa).

Residues Cys112 and His244 contribute to the active site. Residues 245–249 (QANLR) form an ACP-binding region. Asn274 is a catalytic residue.

It belongs to the thiolase-like superfamily. FabH family. In terms of assembly, homodimer.

The protein localises to the cytoplasm. The enzyme catalyses malonyl-[ACP] + acetyl-CoA + H(+) = 3-oxobutanoyl-[ACP] + CO2 + CoA. The protein operates within lipid metabolism; fatty acid biosynthesis. Catalyzes the condensation reaction of fatty acid synthesis by the addition to an acyl acceptor of two carbons from malonyl-ACP. Catalyzes the first condensation reaction which initiates fatty acid synthesis and may therefore play a role in governing the total rate of fatty acid production. Possesses both acetoacetyl-ACP synthase and acetyl transacylase activities. Its substrate specificity determines the biosynthesis of branched-chain and/or straight-chain of fatty acids. In Citrobacter koseri (strain ATCC BAA-895 / CDC 4225-83 / SGSC4696), this protein is Beta-ketoacyl-[acyl-carrier-protein] synthase III.